A 475-amino-acid polypeptide reads, in one-letter code: Lipoprotein lipase (475 aa).

Positions 1-27 (MESKALLVLTLAVWLQSLTASRGGVAA) are cleaved as a signal peptide. Residues 32–53 (RDFIDIESKFALRTPEDTAEDT) are interaction with GPIHBP1. An intrachain disulfide couples Cys54 to Cys67. N-linked (GlcNAc...) asparagine glycosylation is present at Asn70. A 3'-nitrotyrosine modification is found at Tyr121. Ser159 acts as the Nucleophile in catalysis. Catalysis depends on Asp183, which acts as the Charge relay system. Tyr191 carries the post-translational modification 3'-nitrotyrosine. 4 residues coordinate Ca(2+): Ala194, Arg197, Ser199, and Asp202. Residues Cys243 and Cys266 are joined by a disulfide bond. Residues 243 to 266 (CNIGEAIRVIAERGLGDVDQLVKC) form an essential for determining substrate specificity region. His268 functions as the Charge relay system in the catalytic mechanism. 2 disulfides stabilise this stretch: Cys291/Cys310 and Cys302/Cys305. Positions 341–464 (FHYQVKIHFS…KGKAPAVFVK (124 aa)) constitute a PLAT domain. 3'-nitrotyrosine is present on Tyr343. Asn386 carries N-linked (GlcNAc...) asparagine glycosylation. The important for interaction with lipoprotein particles stretch occupies residues 417–421 (WSDWW). Residues 430 to 434 (KIRVK) form an important for heparin binding region. Residues 443 to 467 (IFCSREKVSHLQKGKAPAVFVKCHD) form an interaction with GPIHBP1 region. Cysteines 445 and 465 form a disulfide.

The protein belongs to the AB hydrolase superfamily. Lipase family. Homodimer. Interacts with GPIHBP1 with 1:1 stoichiometry. Interacts with APOC2; the interaction activates LPL activity in the presence of lipids. Interaction with heparan sulfate proteoglycans is required to protect LPL against loss of activity. Associates with lipoprotein particles in blood plasma. Interacts with LMF1 and SEL1L; interaction with SEL1L is required to prevent aggregation of newly synthesized LPL in the endoplasmic reticulum (ER), and for normal export of LPL from the ER to the extracellular space. Interacts with SORL1; SORL1 acts as a sorting receptor, promoting LPL localization to endosomes and later to lysosomes, leading to degradation of newly synthesized LPL. In terms of processing, tyrosine nitration after lipopolysaccharide (LPS) challenge down-regulates the lipase activity. In terms of tissue distribution, detected in blood plasma. Detected in milk (at protein level).

The protein resides in the cell membrane. The protein localises to the secreted. Its subcellular location is the extracellular space. It localises to the extracellular matrix. It carries out the reaction a triacylglycerol + H2O = a diacylglycerol + a fatty acid + H(+). The catalysed reaction is a 1,2-diacyl-sn-glycero-3-phosphocholine + H2O = a 2-acyl-sn-glycero-3-phosphocholine + a fatty acid + H(+). It catalyses the reaction 1,2,3-tri-(9Z-octadecenoyl)-glycerol + H2O = di-(9Z)-octadecenoylglycerol + (9Z)-octadecenoate + H(+). The enzyme catalyses 1,2-di-(9Z-octadecenoyl)-sn-glycero-3-phosphocholine + H2O = (9Z-octadecenoyl)-sn-glycero-3-phosphocholine + (9Z)-octadecenoate + H(+). It carries out the reaction 1,2,3-tributanoylglycerol + H2O = dibutanoylglycerol + butanoate + H(+). The catalysed reaction is 1,2-dihexadecanoyl-sn-glycero-3-phosphocholine + H2O = hexadecanoyl-sn-glycero-3-phosphocholine + hexadecanoate + H(+). Its activity is regulated as follows. The apolipoprotein APOC2 acts as a coactivator of LPL activity. Ca(2+) binding promotes protein stability and formation of the active homodimer. Interaction with GPIHBP1 protects LPL against inactivation by ANGPTL4. Inhibited by NaCl. In terms of biological role, key enzyme in triglyceride metabolism. Catalyzes the hydrolysis of triglycerides from circulating chylomicrons and very low density lipoproteins (VLDL), and thereby plays an important role in lipid clearance from the blood stream, lipid utilization and storage. Although it has both phospholipase and triglyceride lipase activities it is primarily a triglyceride lipase with low but detectable phospholipase activity. Mediates margination of triglyceride-rich lipoprotein particles in capillaries. Recruited to its site of action on the luminal surface of vascular endothelium by binding to GPIHBP1 and cell surface heparan sulfate proteoglycans. The sequence is that of Lipoprotein lipase (LPL) from Homo sapiens (Human).